The chain runs to 350 residues: Sperm equatorial segment protein 1 (350 aa).

The signal sequence occupies residues 1–19 (MKPLVLLVALLLWPSSVPA). A glycan (N-linked (GlcNAc...) asparagine) is linked at Asn128.

Belongs to the SPESP1 family. Glycosylated. In testis there are two predominant forms of 77- and 67-kDa and a form of 47-kDa, whereas in epididymal sperm from caput, corpus, and cauda there are two forms of 47- and 43-kDa. Testis forms contain complex carbohydrate residues. Epididymal sperm forms are N-glycosylated. Then undergoes significant glycosylation in the testis and that the majority of these glycoconjugates are removed by the time sperm reach the caput epididymis. Highly expressed in testis, where it is localized in the acrosome of postmeiotic stages of spermiogenesis (round and elongating spermatids and in ejaculated spermatozoa) (at protein level). Poorly expressed in placenta and fetal lung.

The protein localises to the cytoplasmic vesicle. Its subcellular location is the secretory vesicle. It is found in the acrosome. Its function is as follows. Involved in fertilization ability of sperm. In Homo sapiens (Human), this protein is Sperm equatorial segment protein 1.